Consider the following 555-residue polypeptide: Meiotic mRNA stability protein kinase SSN3 (555 aa).

The Protein kinase domain occupies Tyr75 to Phe463. Ile81–Val89 contacts ATP. Residues Thr100–Leu138 show a composition bias toward polar residues. A disordered region spans residues Thr100–Ser166. Lys183 is a binding site for ATP. Asp286 functions as the Proton acceptor in the catalytic mechanism.

The protein belongs to the protein kinase superfamily. CMGC Ser/Thr protein kinase family. CDC2/CDKX subfamily. As to quaternary structure, component of the SRB8-11 complex which consists of SRB8, SSN2/SRB9, SSN3/SRB10 and SSN8/SRB11. The SRB8-11 complex associates with the Mediator complex. The SSN3/SRB10 and SSN8/SRB11 kinase-cyclin pair also associate with the RNA polymerase II holoenzyme. Interacts with TUP1.

The protein localises to the nucleus. The enzyme catalyses L-seryl-[protein] + ATP = O-phospho-L-seryl-[protein] + ADP + H(+). It catalyses the reaction L-threonyl-[protein] + ATP = O-phospho-L-threonyl-[protein] + ADP + H(+). It carries out the reaction [DNA-directed RNA polymerase] + ATP = phospho-[DNA-directed RNA polymerase] + ADP + H(+). Component of the SRB8-11 complex. The SRB8-11 complex is a regulatory module of the Mediator complex which is itself involved in regulation of basal and activated RNA polymerase II-dependent transcription. The SRB8-11 complex may be involved in the transcriptional repression of a subset of genes regulated by Mediator. It may inhibit the association of the Mediator complex with RNA polymerase II to form the holoenzyme complex. The SRB8-11 complex phosphorylates the C-terminal domain (CTD) of the largest subunit of RNA polymerase II RPB1 at serines 2 and 5. The SSN3/SRB10 and SSN8/SRB11 kinase-cyclin pair may also positively and negatively regulate numerous transcriptional activators in response to changes in nutritional and physiological conditions. Phosphorylates GCN4, promoting its ubiquitin-mediated degradation, and MSN2, promoting its nuclear exclusion. Phosphorylates STE12, thereby promoting its degradation and inhibition of filamentous growth. Phosphorylates GAL4, and this phosphorylation is required for efficient galactose-inducible transcription. Also phosphorylates BDF1 and the TAF2 subunit of the TFIID complex. The polypeptide is Meiotic mRNA stability protein kinase SSN3 (SSN3) (Saccharomyces cerevisiae (strain ATCC 204508 / S288c) (Baker's yeast)).